Consider the following 89-residue polypeptide: Putative regulatory protein RBAM_015500 (89 aa).

It belongs to the RemA family.

The polypeptide is Putative regulatory protein RBAM_015500 (Bacillus velezensis (strain DSM 23117 / BGSC 10A6 / LMG 26770 / FZB42) (Bacillus amyloliquefaciens subsp. plantarum)).